Reading from the N-terminus, the 172-residue chain is RNA silencing suppressor p19 (172 aa).

Residues 153–172 (EGNVSRGSPEGTEAFKEESE) form a disordered region.

The protein belongs to the tombusvirus protein p19 family. Homodimer.

Functionally, viral suppressor of RNA silencing which binds specifically to silencing RNAs (siRNAs). Acts as a molecular caliper to specifically select siRNAs based on the length of the duplex region of the RNA. The chain is RNA silencing suppressor p19 from Pear latent virus (PeLV).